Reading from the N-terminus, the 281-residue chain is Energy-coupling factor transporter ATP-binding protein EcfA2 (281 aa).

The ABC transporter domain maps to Ile-3–Ala-242. ATP is bound at residue Gly-40 to Ser-47.

The protein belongs to the ABC transporter superfamily. Energy-coupling factor EcfA family. Forms a stable energy-coupling factor (ECF) transporter complex composed of 2 membrane-embedded substrate-binding proteins (S component), 2 ATP-binding proteins (A component) and 2 transmembrane proteins (T component).

The protein localises to the cell membrane. Its function is as follows. ATP-binding (A) component of a common energy-coupling factor (ECF) ABC-transporter complex. Unlike classic ABC transporters this ECF transporter provides the energy necessary to transport a number of different substrates. This chain is Energy-coupling factor transporter ATP-binding protein EcfA2, found in Acetivibrio thermocellus (strain ATCC 27405 / DSM 1237 / JCM 9322 / NBRC 103400 / NCIMB 10682 / NRRL B-4536 / VPI 7372) (Clostridium thermocellum).